Consider the following 415-residue polypeptide: Serine/threonine transporter SstT (415 aa).

Helical transmembrane passes span 21 to 41, 45 to 65, 85 to 105, 142 to 162, 193 to 213, 217 to 237, 289 to 309, and 331 to 351; these read ILLGLAAGIILASLSTQAALA, LGTLFVGALKAVAPILVLVLV, FLYLIGTFSAALIAVVLSVLF, ALLNANYIGILVWAVGLGIAF, LGIFGLVASTLAETGFGALWG, LLMVLIGGMLLVALVVNPLIV, VAIPLGATINMAGAAITITVL, and VVASLCACGASGVAGGSLLLI.

It belongs to the dicarboxylate/amino acid:cation symporter (DAACS) (TC 2.A.23) family.

Its subcellular location is the cell inner membrane. The catalysed reaction is L-serine(in) + Na(+)(in) = L-serine(out) + Na(+)(out). It carries out the reaction L-threonine(in) + Na(+)(in) = L-threonine(out) + Na(+)(out). Functionally, involved in the import of serine and threonine into the cell, with the concomitant import of sodium (symport system). In Pectobacterium atrosepticum (strain SCRI 1043 / ATCC BAA-672) (Erwinia carotovora subsp. atroseptica), this protein is Serine/threonine transporter SstT.